The chain runs to 269 residues: Microtubule-associated protein RP/EB family member 1 (269 aa).

The Calponin-homology (CH) domain occupies 14 to 116 (NLSRHDMLAW…FVQWFKKFFD (103 aa)). Positions 168-190 (RTAVSNKPPAQGISKKPATVGNG) are disordered. Positions 186 to 256 (TVGNGDDESA…LYATDEGFVI (71 aa)) constitute an EB1 C-terminal domain.

It belongs to the MAPRE family.

Its subcellular location is the cytoplasm. The protein resides in the cytoskeleton. It is found in the microtubule organizing center. The protein localises to the centrosome. It localises to the golgi apparatus. Its subcellular location is the spindle. The protein resides in the spindle pole. Plus-end tracking protein (+TIP) that binds to the plus-end of microtubules and regulates the dynamics of the microtubule cytoskeleton. Promotes cytoplasmic microtubule nucleation and elongation. Involved in mitotic spindle positioning by stabilizing microtubules and promoting dynamic connection between astral microtubules and the cortex during mitotic chromosome segregation. The sequence is that of Microtubule-associated protein RP/EB family member 1 (mapre1) from Xenopus tropicalis (Western clawed frog).